The primary structure comprises 488 residues: Glutamyl-tRNA(Gln) amidotransferase subunit A (488 aa).

Catalysis depends on charge relay system residues Lys76 and Ser152. Catalysis depends on Ser176, which acts as the Acyl-ester intermediate.

Belongs to the amidase family. GatA subfamily. As to quaternary structure, heterotrimer of A, B and C subunits.

It carries out the reaction L-glutamyl-tRNA(Gln) + L-glutamine + ATP + H2O = L-glutaminyl-tRNA(Gln) + L-glutamate + ADP + phosphate + H(+). Its function is as follows. Allows the formation of correctly charged Gln-tRNA(Gln) through the transamidation of misacylated Glu-tRNA(Gln) in organisms which lack glutaminyl-tRNA synthetase. The reaction takes place in the presence of glutamine and ATP through an activated gamma-phospho-Glu-tRNA(Gln). This is Glutamyl-tRNA(Gln) amidotransferase subunit A from Oceanobacillus iheyensis (strain DSM 14371 / CIP 107618 / JCM 11309 / KCTC 3954 / HTE831).